The sequence spans 67 residues: Conotoxin Cl14c (67 aa).

A signal peptide spans 1–20; that stretch reads MNVTVMFLVLLLLTMPLTDG. Positions 21-48 are excised as a propeptide; the sequence is FNIRATNGGELFGPVQRDAGNVLDHGFQ.

The protein belongs to the conotoxin L superfamily. In terms of processing, contains 2 disulfide bonds. Expressed by the venom duct.

The protein resides in the secreted. This Californiconus californicus (California cone) protein is Conotoxin Cl14c.